The following is a 30-amino-acid chain: Vitri peptide A (30 aa).

Residues 1-30 (GIPCGESCVWIPCITSAIGCSCKSKVCYRN) constitute a cross-link (cyclopeptide (Gly-Asn)). Disulfide bonds link cysteine 4–cysteine 20, cysteine 8–cysteine 22, and cysteine 13–cysteine 27.

Post-translationally, this is a cyclic peptide.

In terms of biological role, probably participates in a plant defense mechanism. Has strong cytotoxic activity against human lymphoma U-937 GTB and human myeloma RPMI-8226/s cell lines. The sequence is that of Vitri peptide A from Viola arvensis (European field pansy).